A 228-amino-acid polypeptide reads, in one-letter code: Probable septum site-determining protein MinC (228 aa).

It belongs to the MinC family. Interacts with MinD and FtsZ.

Functionally, cell division inhibitor that blocks the formation of polar Z ring septums. Rapidly oscillates between the poles of the cell to destabilize FtsZ filaments that have formed before they mature into polar Z rings. Prevents FtsZ polymerization. This is Probable septum site-determining protein MinC from Pectobacterium carotovorum subsp. carotovorum (strain PC1).